The primary structure comprises 316 residues: MIKSERPQAYIGRFAPSPSGDLHFGSLITAIGSYLQARACQGKWLIRIDDIDPPREVPGAASRILHALEHYGLHWDGEILYQSQRHEAYCHVLNQLQQQGLSYYCTCTRQRIHQINGFYDRNCRELNLPIDHAAIRFKQRHPVYGFEDKLQGYLNADPVMAEEDFIIHRRDGLFAYNLVVVIDDDYQGVTEVVRGVDLIEPTVRQIALYRQLNLKIPDYIHLPLALNKDGNKLSKQNHAQPIPLDDPRPLLIEALSFLNQSVIENWQDLSRDQLLQKATAHWDLDRIPRQGKIHIDNMNKVTVSHNNHSQKIHSRL.

L-glutamate is bound by residues Arg13 to Ser17 and Asp49. The 'HIGH' region motif lies at Pro16–Ser26. The Zn(2+) site is built by Cys105, Cys107, Tyr119, and Cys123. L-glutamate-binding residues include Tyr176 and Arg194. The 'KMSKS' region signature appears at Lys232 to Gln236. Lys235 contributes to the ATP binding site.

Belongs to the class-I aminoacyl-tRNA synthetase family. GluQ subfamily. It depends on Zn(2+) as a cofactor.

Its function is as follows. Catalyzes the tRNA-independent activation of glutamate in presence of ATP and the subsequent transfer of glutamate onto a tRNA(Asp). Glutamate is transferred on the 2-amino-5-(4,5-dihydroxy-2-cyclopenten-1-yl) moiety of the queuosine in the wobble position of the QUC anticodon. The sequence is that of Glutamyl-Q tRNA(Asp) synthetase from Photorhabdus laumondii subsp. laumondii (strain DSM 15139 / CIP 105565 / TT01) (Photorhabdus luminescens subsp. laumondii).